The primary structure comprises 301 residues: Homoserine O-acetyltransferase (301 aa).

Catalysis depends on Cys142, which acts as the Acyl-thioester intermediate. Substrate-binding residues include Lys163 and Ser192. His235 serves as the catalytic Proton acceptor. Residue Glu237 is part of the active site. Arg249 provides a ligand contact to substrate.

Belongs to the MetA family.

It is found in the cytoplasm. It catalyses the reaction L-homoserine + acetyl-CoA = O-acetyl-L-homoserine + CoA. It participates in amino-acid biosynthesis; L-methionine biosynthesis via de novo pathway; O-acetyl-L-homoserine from L-homoserine: step 1/1. Transfers an acetyl group from acetyl-CoA to L-homoserine, forming acetyl-L-homoserine. This is Homoserine O-acetyltransferase from Bacillus subtilis (strain 168).